The primary structure comprises 218 residues: MWPPCGAMRNLALVLARSQRARACSGNERVSYTQGQSPEPRTREYFYYVDHQGQLFLDDSKMKNFITCFKDLQFLVTFFSRLRPNHSGRYEASFPFLSLCGRERNFLRCEDRPVVFTHLLASDSESPRLSYCGGGEALAIPFEPARLLPLAANGRLYHPAPERAGGVGLVRSALAFELSACFEYGPNSPTVPSHVQWQGRRIALTMDLAPLLLAAPPP.

The protein belongs to the UPF0598 family.

This is UPF0598 protein C8orf82 homolog from Rattus norvegicus (Rat).